Reading from the N-terminus, the 394-residue chain is Glutamyl-tRNA reductase (394 aa).

Substrate is bound by residues 45 to 48 (TCNR), Ser-99, 104 to 106 (EEQ), and Gln-110. Residue Cys-46 is the Nucleophile of the active site. Residue 175 to 180 (GLGNIG) participates in NADP(+) binding.

It belongs to the glutamyl-tRNA reductase family. In terms of assembly, homodimer.

It catalyses the reaction (S)-4-amino-5-oxopentanoate + tRNA(Glu) + NADP(+) = L-glutamyl-tRNA(Glu) + NADPH + H(+). The protein operates within porphyrin-containing compound metabolism; protoporphyrin-IX biosynthesis; 5-aminolevulinate from L-glutamyl-tRNA(Glu): step 1/2. Catalyzes the NADPH-dependent reduction of glutamyl-tRNA(Glu) to glutamate 1-semialdehyde (GSA). The polypeptide is Glutamyl-tRNA reductase (Caldicellulosiruptor saccharolyticus (strain ATCC 43494 / DSM 8903 / Tp8T 6331)).